Reading from the N-terminus, the 269-residue chain is Arginine and glutamate-rich protein 1-B (269 aa).

A compositionally biased stretch (basic residues) spans 1 to 57 (MGRSRSRSSSRSKHSKTSKHSKKRSRSRSRSRDRERKRRSKSRESKRNRRRESRSRS). The tract at residues 1–70 (MGRSRSRSSS…TATSRRDRER (70 aa)) is necessary and sufficient for RNA binding. 2 disordered regions span residues 1 to 109 (MGRS…MERQ) and 233 to 269 (RMKLEQERQKQQKEEQKMILGKGKSRPKLSFSLKASE). Basic and acidic residues-rich tracts occupy residues 64–80 (SRRDRERAASPPERIDI), 89–109 (SAVDEKQKKEEEEKKVEMERQ), and 233–249 (RMKLEQERQKQQKEEQK). The tract at residues 71–269 (AASPPERIDI…KLSFSLKASE (199 aa)) is necessary and sufficient for transcriptional regulation.

Belongs to the ARGLU1 family.

The protein resides in the nucleus. It localises to the nucleus speckle. Its subcellular location is the chromosome. In terms of biological role, dual function regulator of gene expression; regulator of transcription and modulator of alternative splicing. General coactivator of nuclear receptor-induced gene expression. The chain is Arginine and glutamate-rich protein 1-B (arglu1b) from Danio rerio (Zebrafish).